The primary structure comprises 81 residues: Large ribosomal subunit protein bL31 (81 aa).

Residues Cys-16, Cys-18, Cys-36, and Cys-39 each contribute to the Zn(2+) site.

Belongs to the bacterial ribosomal protein bL31 family. Type A subfamily. In terms of assembly, part of the 50S ribosomal subunit. It depends on Zn(2+) as a cofactor.

In terms of biological role, binds the 23S rRNA. The sequence is that of Large ribosomal subunit protein bL31 from Rhodopirellula baltica (strain DSM 10527 / NCIMB 13988 / SH1).